A 380-amino-acid chain; its full sequence is MALNLRKNHPLLKIVNDSLIDLPTPSNISTWWNFGSLLGICLVTQIVTGLLLAMHYTADTSLAFTSVAHTCRNVQFGWLIRNLHANGASFFFICIYLHIGRGLYYGSYLNKETWNVGVILLLTLMATAFVGYVLPWGQMSFWGATVITNLFSAIPYIGQTLVEWAWGGFSVDNPTLTRFFALHFLLPFVIAGLTLVHLTFLHETGSNNPLGIPSDCDKIPFHPYYSIKDILGFALMLASLVALALFSPNLLGDPENFTPANPLATPPHIKPEWYFLFAYAILRSIPNKLGGVLALAASILVLFLMPLLHTSKQRSMTFRPLSQILFWVLVTNVLILTWIGSQPVEQPFIIIGQLASLSYFTIILVLFPIAGVLENKMLKL.

4 helical membrane passes run 34-54 (FGSL…LLAM), 78-99 (WLIR…YLHI), 114-134 (WNVG…GYVL), and 179-199 (FFAL…VHLT). H84 and H98 together coordinate heme b. H183 and H197 together coordinate heme b. An a ubiquinone-binding site is contributed by H202. 4 helical membrane-spanning segments follow: residues 227-247 (IKDI…ALFS), 289-309 (LGGV…PLLH), 321-341 (LSQI…WIGS), and 348-368 (FIII…VLFP).

It belongs to the cytochrome b family. The cytochrome bc1 complex contains 11 subunits: 3 respiratory subunits (MT-CYB, CYC1 and UQCRFS1), 2 core proteins (UQCRC1 and UQCRC2) and 6 low-molecular weight proteins (UQCRH/QCR6, UQCRB/QCR7, UQCRQ/QCR8, UQCR10/QCR9, UQCR11/QCR10 and a cleavage product of UQCRFS1). This cytochrome bc1 complex then forms a dimer. The cofactor is heme b.

The protein resides in the mitochondrion inner membrane. Component of the ubiquinol-cytochrome c reductase complex (complex III or cytochrome b-c1 complex) that is part of the mitochondrial respiratory chain. The b-c1 complex mediates electron transfer from ubiquinol to cytochrome c. Contributes to the generation of a proton gradient across the mitochondrial membrane that is then used for ATP synthesis. The sequence is that of Cytochrome b (MT-CYB) from Vireo olivaceus (Red-eyed vireo).